We begin with the raw amino-acid sequence, 147 residues long: Nucleoside diphosphate kinase (147 aa).

K11, F59, R87, T93, R104, and N114 together coordinate ATP. Residue H117 is the Pros-phosphohistidine intermediate of the active site.

Belongs to the NDK family. As to quaternary structure, homotetramer. Mg(2+) is required as a cofactor.

It is found in the cytoplasm. It carries out the reaction a 2'-deoxyribonucleoside 5'-diphosphate + ATP = a 2'-deoxyribonucleoside 5'-triphosphate + ADP. It catalyses the reaction a ribonucleoside 5'-diphosphate + ATP = a ribonucleoside 5'-triphosphate + ADP. Major role in the synthesis of nucleoside triphosphates other than ATP. The ATP gamma phosphate is transferred to the NDP beta phosphate via a ping-pong mechanism, using a phosphorylated active-site intermediate. The chain is Nucleoside diphosphate kinase from Anaeromyxobacter dehalogenans (strain 2CP-C).